The sequence spans 437 residues: 26S proteasome regulatory subunit 4 homolog (437 aa).

The tract at residues 1–47 (MGQGVSSGQDKKKKKGSNQKPKYEPPVQSKFGRKKRKGGPATAEKLP) is disordered. G2 is lipidated: N-myristoyl glycine. Residue 223 to 230 (GAPGTGKT) coordinates ATP. Residues K234, K255, and K290 each participate in a glycyl lysine isopeptide (Lys-Gly) (interchain with G-Cter in ubiquitin) cross-link.

It belongs to the AAA ATPase family.

Its subcellular location is the cytoplasm. It localises to the nucleus. The 26S proteasome is involved in the ATP-dependent degradation of ubiquitinated proteins. The regulatory (or ATPase) complex confers ATP dependency and substrate specificity to the 26S complex. Has ATPase activity. This Saccharomyces cerevisiae (strain ATCC 204508 / S288c) (Baker's yeast) protein is 26S proteasome regulatory subunit 4 homolog (RPT2).